The sequence spans 452 residues: CCA-adding enzyme (452 aa).

Positions 54 and 57 each coordinate ATP. CTP contacts are provided by Ser54 and Arg57. Positions 66, 68, and 117 each coordinate Mg(2+). ATP-binding residues include His140, Lys160, and Tyr169. CTP-binding residues include His140, Lys160, and Tyr169.

Belongs to the tRNA nucleotidyltransferase/poly(A) polymerase family. Archaeal CCA-adding enzyme subfamily. As to quaternary structure, homodimer. The cofactor is Mg(2+).

It catalyses the reaction a tRNA precursor + 2 CTP + ATP = a tRNA with a 3' CCA end + 3 diphosphate. The catalysed reaction is a tRNA with a 3' CCA end + 2 CTP + ATP = a tRNA with a 3' CCACCA end + 3 diphosphate. Functionally, catalyzes the addition and repair of the essential 3'-terminal CCA sequence in tRNAs without using a nucleic acid template. Adds these three nucleotides in the order of C, C, and A to the tRNA nucleotide-73, using CTP and ATP as substrates and producing inorganic pyrophosphate. tRNA 3'-terminal CCA addition is required both for tRNA processing and repair. Also involved in tRNA surveillance by mediating tandem CCA addition to generate a CCACCA at the 3' terminus of unstable tRNAs. While stable tRNAs receive only 3'-terminal CCA, unstable tRNAs are marked with CCACCA and rapidly degraded. This is CCA-adding enzyme from Halobacterium salinarum (strain ATCC 29341 / DSM 671 / R1).